The primary structure comprises 562 residues: Arginine--tRNA ligase (562 aa).

A 'HIGH' region motif is present at residues 129–139 (ANPTGPLHVGH).

Belongs to the class-I aminoacyl-tRNA synthetase family. Monomer.

Its subcellular location is the cytoplasm. The catalysed reaction is tRNA(Arg) + L-arginine + ATP = L-arginyl-tRNA(Arg) + AMP + diphosphate. This Xanthomonas campestris pv. campestris (strain B100) protein is Arginine--tRNA ligase.